The sequence spans 155 residues: Ribosomal RNA large subunit methyltransferase H (155 aa).

S-adenosyl-L-methionine is bound by residues Leu72, Gly103, and Leu122–Trp127.

The protein belongs to the RNA methyltransferase RlmH family. As to quaternary structure, homodimer.

It is found in the cytoplasm. The catalysed reaction is pseudouridine(1915) in 23S rRNA + S-adenosyl-L-methionine = N(3)-methylpseudouridine(1915) in 23S rRNA + S-adenosyl-L-homocysteine + H(+). In terms of biological role, specifically methylates the pseudouridine at position 1915 (m3Psi1915) in 23S rRNA. This is Ribosomal RNA large subunit methyltransferase H from Cereibacter sphaeroides (strain ATCC 17029 / ATH 2.4.9) (Rhodobacter sphaeroides).